The chain runs to 182 residues: Peptidoglycan-recognition protein SB2 (182 aa).

An N-terminal signal peptide occupies residues 1 to 17; it reads MKLQLALVLCGLTLALG. The N-acetylmuramoyl-L-alanine amidase domain occupies 40–165; that stretch reads PVRLIIIHHT…CQTKATACPG (126 aa). A Zn(2+)-binding site is contributed by histidine 47. The cysteines at positions 54 and 60 are disulfide-linked. N-linked (GlcNAc...) asparagine glycosylation occurs at asparagine 149. Positions 155 and 163 each coordinate Zn(2+).

Belongs to the N-acetylmuramoyl-L-alanine amidase 2 family. Zn(2+) is required as a cofactor.

It localises to the secreted. The catalysed reaction is Hydrolyzes the link between N-acetylmuramoyl residues and L-amino acid residues in certain cell-wall glycopeptides.. N-acetylmuramyl-L-alanine amidase involved in innate immunity by degrading bacterial peptidoglycans (PGN). Probably plays a scavenger role by digesting biologically active PGN into biologically inactive fragments. Has no direct bacteriolytic activity. In Drosophila simulans (Fruit fly), this protein is Peptidoglycan-recognition protein SB2 (PGRP-SB2).